A 369-amino-acid chain; its full sequence is Large ribosomal subunit protein uL4 (369 aa).

At threonine 2 the chain carries N-acetylthreonine.

This sequence belongs to the universal ribosomal protein uL4 family.

This is Large ribosomal subunit protein uL4 (rpl4) from Dictyostelium discoideum (Social amoeba).